The following is a 656-amino-acid chain: Probable serine/threonine-protein kinase sky1 (656 aa).

The tract at residues 1-127 (MSDIQQDSTS…KQGGYHPVRR (127 aa)) is disordered. A compositionally biased stretch (gly residues) spans 16–48 (TSLGGTSLGGTSLGGTSLGGTSLGGTSLGGTSL). Low complexity-rich tracts occupy residues 49–64 (GGST…STNS) and 72–89 (TSSN…NNNE). Over residues 96–108 (AGSSNKSFMPLNN) the composition is skewed to polar residues. The Protein kinase domain maps to 135–648 (YQVVDKLGWG…AKDCLNHTWL (514 aa)). Residue 141-149 (LGWGHFSTV) participates in ATP binding. The tract at residues 157-185 (TPITTSSSSSSTTTTTTSSSSNGNGNGNG) is disordered. Low complexity predominate over residues 160-179 (TTSSSSSSTTTTTTSSSSNG). Lys197 contacts ATP. The active-site Proton acceptor is Asp298. Positions 330–454 (RTSSSNKQSQ…TTATATATTT (125 aa)) are disordered. Low complexity predominate over residues 332–355 (SSSNKQSQQQQQPQQQQSQQNIND). Composition is skewed to basic and acidic residues over residues 383–401 (SNRD…DDNK) and 413–440 (ENTD…KEEP). The segment covering 441-454 (TTTTTTATATATTT) has biased composition (low complexity).

This sequence belongs to the protein kinase superfamily. CMGC Ser/Thr protein kinase family.

The enzyme catalyses L-seryl-[protein] + ATP = O-phospho-L-seryl-[protein] + ADP + H(+). The catalysed reaction is L-threonyl-[protein] + ATP = O-phospho-L-threonyl-[protein] + ADP + H(+). In Dictyostelium discoideum (Social amoeba), this protein is Probable serine/threonine-protein kinase sky1 (sky1).